A 479-amino-acid chain; its full sequence is ATP-dependent protease ATPase subunit HslU (479 aa).

Residues I32, 74-79 (GVGKTE), D290, E355, and R427 contribute to the ATP site.

The protein belongs to the ClpX chaperone family. HslU subfamily. A double ring-shaped homohexamer of HslV is capped on each side by a ring-shaped HslU homohexamer. The assembly of the HslU/HslV complex is dependent on binding of ATP.

It localises to the cytoplasm. Its function is as follows. ATPase subunit of a proteasome-like degradation complex; this subunit has chaperone activity. The binding of ATP and its subsequent hydrolysis by HslU are essential for unfolding of protein substrates subsequently hydrolyzed by HslV. HslU recognizes the N-terminal part of its protein substrates and unfolds these before they are guided to HslV for hydrolysis. This is ATP-dependent protease ATPase subunit HslU from Leptospira interrogans serogroup Icterohaemorrhagiae serovar copenhageni (strain Fiocruz L1-130).